A 278-amino-acid polypeptide reads, in one-letter code: Elongation factor Ts (278 aa).

Residues 80-83 form an involved in Mg(2+) ion dislocation from EF-Tu region; the sequence is TDFV.

This sequence belongs to the EF-Ts family.

The protein localises to the cytoplasm. In terms of biological role, associates with the EF-Tu.GDP complex and induces the exchange of GDP to GTP. It remains bound to the aminoacyl-tRNA.EF-Tu.GTP complex up to the GTP hydrolysis stage on the ribosome. This Arthrobacter sp. (strain FB24) protein is Elongation factor Ts.